A 289-amino-acid polypeptide reads, in one-letter code: ATP synthase gamma chain (289 aa).

The protein belongs to the ATPase gamma chain family. As to quaternary structure, F-type ATPases have 2 components, CF(1) - the catalytic core - and CF(0) - the membrane proton channel. CF(1) has five subunits: alpha(3), beta(3), gamma(1), delta(1), epsilon(1). CF(0) has three main subunits: a, b and c.

The protein resides in the cell membrane. Produces ATP from ADP in the presence of a proton gradient across the membrane. The gamma chain is believed to be important in regulating ATPase activity and the flow of protons through the CF(0) complex. The chain is ATP synthase gamma chain from Mycoplasmopsis synoviae (strain 53) (Mycoplasma synoviae).